The chain runs to 862 residues: Taxadiene synthase (862 aa).

Mg(2+) contacts are provided by aspartate 613, aspartate 617, asparagine 757, threonine 761, and glutamate 765. The DDXXD motif motif lies at aspartate 613–aspartate 617.

This sequence belongs to the terpene synthase family. Mg(2+) is required as a cofactor.

It catalyses the reaction (2E,6E,10E)-geranylgeranyl diphosphate = taxa-4(5),11(12)-diene + diphosphate. It participates in alkaloid biosynthesis; taxol biosynthesis; taxa-4(20),11-dien-5alpha-ol from geranylgeranyl diphosphate: step 1/2. Functionally, catalyzes the cyclization of the ubiquitous isoprenoid intermediate geranylgeranyl diphosphate to taxa-4,11-diene, the parent olefin with a taxane skeleton. The protein is Taxadiene synthase (TDC1) of Taxus brevifolia (Pacific yew).